A 537-amino-acid chain; its full sequence is Chaperonin GroEL 2 (537 aa).

Residues 29–32, 86–90, glycine 413, 477–479, and aspartate 493 each bind ATP; these read TLGP, DGTTT, and NAA.

This sequence belongs to the chaperonin (HSP60) family. Forms a cylinder of 14 subunits composed of two heptameric rings stacked back-to-back. Interacts with the co-chaperonin GroES.

The protein localises to the cytoplasm. The catalysed reaction is ATP + H2O + a folded polypeptide = ADP + phosphate + an unfolded polypeptide.. In terms of biological role, together with its co-chaperonin GroES, plays an essential role in assisting protein folding. The GroEL-GroES system forms a nano-cage that allows encapsulation of the non-native substrate proteins and provides a physical environment optimized to promote and accelerate protein folding. This chain is Chaperonin GroEL 2, found in Thermobifida fusca (strain YX).